A 152-amino-acid chain; its full sequence is Ubiquitin-conjugating enzyme E2 N (152 aa).

Positions 3–149 (GLPRRIIKET…ARAWTRLYAM (147 aa)) constitute a UBC core domain. An N6-acetyllysine modification is found at lysine 82. The active-site Glycyl thioester intermediate is the cysteine 87. A Glycyl lysine isopeptide (Lys-Gly) (interchain with G-Cter in ISG15) cross-link involves residue lysine 92.

The protein belongs to the ubiquitin-conjugating enzyme family. Heterodimer with UBE2V2. Interacts (UBE2V2-UBE2N heterodimer) with the E3 ligase STUB1 (via the U-box domain); the complex has a specific 'Lys-63'-linked polyubiquitination activity. Interacts with RNF8 and RNF168. Interacts with RNF11. Interacts with the E3 ligases, HLTF and SHPRH; the interactions promote the 'Lys-63'-linked polyubiquitination of PCNA upon genotoxic stress and lead to DNA repair. Interacts with ARIH2 (via RING-type 2). Interacts with OTUB1; leading to inhibit E2-conjugating activity. Interacts with RIGI and RNF135; involved in RIGI ubiquitination and activation. Post-translationally, conjugation to ISG15 impairs formation of the thioester bond with ubiquitin but not interaction with UBE2V2.

The catalysed reaction is S-ubiquitinyl-[E1 ubiquitin-activating enzyme]-L-cysteine + [E2 ubiquitin-conjugating enzyme]-L-cysteine = [E1 ubiquitin-activating enzyme]-L-cysteine + S-ubiquitinyl-[E2 ubiquitin-conjugating enzyme]-L-cysteine.. The protein operates within protein modification; protein ubiquitination. With respect to regulation, activity is inhibited by binding to OTUB1, which prevents 'Lys-63'-linked polyubiquitination. In terms of biological role, the UBE2V1-UBE2N and UBE2V2-UBE2N heterodimers catalyze the synthesis of non-canonical 'Lys-63'-linked polyubiquitin chains. This type of polyubiquitination does not lead to protein degradation by the proteasome. Mediates transcriptional activation of target genes. Plays a role in the control of progress through the cell cycle and differentiation. Plays a role in the error-free DNA repair pathway and contributes to the survival of cells after DNA damage. Acts together with the E3 ligases, HLTF and SHPRH, in the 'Lys-63'-linked poly-ubiquitination of PCNA upon genotoxic stress, which is required for DNA repair. Appears to act together with E3 ligase RNF5 in the 'Lys-63'-linked polyubiquitination of JKAMP thereby regulating JKAMP function by decreasing its association with components of the proteasome and ERAD. Promotes TRIM5 capsid-specific restriction activity and the UBE2V1-UBE2N heterodimer acts in concert with TRIM5 to generate 'Lys-63'-linked polyubiquitin chains which activate the MAP3K7/TAK1 complex which in turn results in the induction and expression of NF-kappa-B and MAPK-responsive inflammatory genes. Together with RNF135 and UB2V1, catalyzes the viral RNA-dependent 'Lys-63'-linked polyubiquitination of RIGI to activate the downstream signaling pathway that leads to interferon beta production. UBE2V1-UBE2N together with TRAF3IP2 E3 ubiquitin ligase mediate 'Lys-63'-linked polyubiquitination of TRAF6, a component of IL17A-mediated signaling pathway. The chain is Ubiquitin-conjugating enzyme E2 N (UBE2N) from Macaca fascicularis (Crab-eating macaque).